We begin with the raw amino-acid sequence, 644 residues long: DNA mismatch repair protein MutL (644 aa).

The tract at residues glycine 363–serine 405 is disordered. Over residues serine 389 to serine 405 the composition is skewed to low complexity.

It belongs to the DNA mismatch repair MutL/HexB family.

Functionally, this protein is involved in the repair of mismatches in DNA. It is required for dam-dependent methyl-directed DNA mismatch repair. May act as a 'molecular matchmaker', a protein that promotes the formation of a stable complex between two or more DNA-binding proteins in an ATP-dependent manner without itself being part of a final effector complex. This is DNA mismatch repair protein MutL from Flavobacterium johnsoniae (strain ATCC 17061 / DSM 2064 / JCM 8514 / BCRC 14874 / CCUG 350202 / NBRC 14942 / NCIMB 11054 / UW101) (Cytophaga johnsonae).